We begin with the raw amino-acid sequence, 198 residues long: Ribonuclease HII (198 aa).

The RNase H type-2 domain occupies 10 to 198; that stretch reads HLVAGVDEVG…PVKRALGLVS (189 aa). A divalent metal cation contacts are provided by aspartate 16, glutamate 17, and aspartate 108.

Belongs to the RNase HII family. Mn(2+) serves as cofactor. Mg(2+) is required as a cofactor.

It localises to the cytoplasm. The catalysed reaction is Endonucleolytic cleavage to 5'-phosphomonoester.. Functionally, endonuclease that specifically degrades the RNA of RNA-DNA hybrids. The chain is Ribonuclease HII from Salmonella schwarzengrund (strain CVM19633).